The chain runs to 392 residues: Large ribosomal subunit protein uL3 (392 aa).

The protein belongs to the universal ribosomal protein uL3 family. As to quaternary structure, component of the large ribosomal subunit (LSU). Mature N.crassa ribosomes consist of a small (40S) and a large (60S) subunit. The 40S small subunit contains 1 molecule of ribosomal RNA (18S rRNA) and at least 32 different proteins. The large 60S subunit contains 3 rRNA molecules (26S, 5.8S and 5S rRNA) and at least 42 different proteins.

It localises to the cytoplasm. Component of the ribosome, a large ribonucleoprotein complex responsible for the synthesis of proteins in the cell. The small ribosomal subunit (SSU) binds messenger RNAs (mRNAs) and translates the encoded message by selecting cognate aminoacyl-transfer RNA (tRNA) molecules. The large subunit (LSU) contains the ribosomal catalytic site termed the peptidyl transferase center (PTC), which catalyzes the formation of peptide bonds, thereby polymerizing the amino acids delivered by tRNAs into a polypeptide chain. The nascent polypeptides leave the ribosome through a tunnel in the LSU and interact with protein factors that function in enzymatic processing, targeting, and the membrane insertion of nascent chains at the exit of the ribosomal tunnel. The protein is Large ribosomal subunit protein uL3 (rpl-3) of Neurospora crassa (strain ATCC 24698 / 74-OR23-1A / CBS 708.71 / DSM 1257 / FGSC 987).